Here is a 521-residue protein sequence, read N- to C-terminus: Maturase K (521 aa).

The protein belongs to the intron maturase 2 family. MatK subfamily.

Its subcellular location is the plastid. It is found in the chloroplast. Its function is as follows. Usually encoded in the trnK tRNA gene intron. Probably assists in splicing its own and other chloroplast group II introns. In Anthericum liliago (St-Bernard's lily), this protein is Maturase K.